A 104-amino-acid polypeptide reads, in one-letter code: Phosphoribosyl-ATP pyrophosphatase (104 aa).

The protein belongs to the PRA-PH family.

It localises to the cytoplasm. The enzyme catalyses 1-(5-phospho-beta-D-ribosyl)-ATP + H2O = 1-(5-phospho-beta-D-ribosyl)-5'-AMP + diphosphate + H(+). Its pathway is amino-acid biosynthesis; L-histidine biosynthesis; L-histidine from 5-phospho-alpha-D-ribose 1-diphosphate: step 2/9. The protein is Phosphoribosyl-ATP pyrophosphatase of Methanosarcina barkeri (strain Fusaro / DSM 804).